The primary structure comprises 111 residues: MKKVIHIGLPELSEEELIRVGEIGQKIIINYIFDHLAKSEVRDLEVTARINRGETLDLELEVYVEVPIFVKVDVESLIEEALDKAYEAIEDYLRRISNERGEKAQRTSEEP.

This sequence belongs to the UPF0440 family.

This is an uncharacterized protein from Pyrococcus furiosus (strain ATCC 43587 / DSM 3638 / JCM 8422 / Vc1).